Reading from the N-terminus, the 1359-residue chain is ABC transporter C family member 1 (1359 aa).

Residues 111-394 enclose the ABC transmembrane type-1 1 domain; it reads NKLTIFLQIL…LPNSIQQLQS (284 aa). 6 helical membrane-spanning segments follow: residues 119–139, 147–167, 214–234, 244–264, 332–352, and 363–383; these read ILTN…IQFI, SFLA…SYTF, LLSV…MGIF, LALL…IMVI, MIFW…VLVL, and ITLE…IPLL. Residues 409–478 are disordered; sequence PEIQQNHSSN…QQQQQQQQQQ (70 aa). Over residues 420–433 the composition is skewed to acidic residues; the sequence is EEEEEDEYDDDINS. A compositionally biased stretch (polar residues) spans 440–450; that stretch reads HNGSFNWNQVD. A compositionally biased stretch (low complexity) spans 459-478; sequence GNQQQQQQQQQQQQQQQQQQ. Residues 470-690 enclose the ABC transporter 1 domain; the sequence is QQQQQQQQQQ…IDFESIMKTK (221 aa). Residue 502-509 coordinates ATP; sequence GVVGSGKT. The 299-residue stretch at 763 to 1061 folds into the ABC transmembrane type-1 2 domain; that stretch reads LRVYKEYFKH…LEVKMNSVER (299 aa). Helical transmembrane passes span 773-793, 819-839, 884-904, 906-926, and 999-1021; these read GSSI…QIIY, IYLL…FMMA, VDLL…TVLV, IGIM…LIGI, and WVAV…FSLF. Positions 1073 to 1102 form a coiled coil; that stretch reads NSKINFFRNEQQEEEEEEEEEFDFDNDDYD. Residues 1116-1350 enclose the ABC transporter 2 domain; the sequence is IEFRNVEIKY…QESRFSKLVK (235 aa). 1150 to 1157 serves as a coordination point for ATP; it reads GRTGAGKS.

Belongs to the ABC transporter superfamily. ABCC family. Conjugate transporter (TC 3.A.1.208) subfamily.

It is found in the membrane. The protein is ABC transporter C family member 1 (abcC1) of Dictyostelium discoideum (Social amoeba).